The chain runs to 445 residues: 3-dehydroquinate synthase, chloroplastic (445 aa).

The N-terminal 68 residues, 1-68, are a transit peptide targeting the chloroplast; it reads MAAFSLSAKQ…RASASSTAPV (68 aa). NAD(+) is bound by residues Asn122, 153 to 155, Lys158, 186 to 191, 211 to 212, Lys224, Lys233, and 251 to 254; these read DGE, GGVIGD, TT, and TLNT. A divalent metal cation is bound at residue Glu266. Lys308 provides a ligand contact to NAD(+). 2 residues coordinate a divalent metal cation: His329 and His346.

The protein belongs to the sugar phosphate cyclases superfamily. Dehydroquinate synthase family. Homodimer. A divalent metal cation is required as a cofactor. Requires NAD(+) as cofactor.

The protein localises to the plastid. It localises to the chloroplast. It catalyses the reaction 7-phospho-2-dehydro-3-deoxy-D-arabino-heptonate = 3-dehydroquinate + phosphate. The protein operates within metabolic intermediate biosynthesis; chorismate biosynthesis; chorismate from D-erythrose 4-phosphate and phosphoenolpyruvate: step 2/7. Catalyzes the second step in the shikimate pathway. The polypeptide is 3-dehydroquinate synthase, chloroplastic (DHQS) (Actinidia chinensis var. chinensis (Chinese soft-hair kiwi)).